The following is a 130-amino-acid chain: uncharacterized protein (130 aa).

The chain crosses the membrane as a helical span at residues 15–31; it reads LYLCPAIIRLSSVCTLA.

The protein resides in the membrane. This is an uncharacterized protein from Saccharomyces cerevisiae (strain ATCC 204508 / S288c) (Baker's yeast).